The chain runs to 185 residues: Ribosome-recycling factor (185 aa).

This sequence belongs to the RRF family.

The protein resides in the cytoplasm. Responsible for the release of ribosomes from messenger RNA at the termination of protein biosynthesis. May increase the efficiency of translation by recycling ribosomes from one round of translation to another. The protein is Ribosome-recycling factor of Francisella tularensis subsp. holarctica (strain FTNF002-00 / FTA).